A 479-amino-acid polypeptide reads, in one-letter code: Altronate oxidoreductase (479 aa).

18–29 (IIQFGEGNFLRA) is a binding site for NAD(+).

The protein belongs to the mannitol dehydrogenase family. UxaB subfamily.

The enzyme catalyses D-altronate + NAD(+) = keto-D-tagaturonate + NADH + H(+). The protein operates within carbohydrate metabolism; pentose and glucuronate interconversion. In Phocaeicola vulgatus (strain ATCC 8482 / DSM 1447 / JCM 5826 / CCUG 4940 / NBRC 14291 / NCTC 11154) (Bacteroides vulgatus), this protein is Altronate oxidoreductase.